We begin with the raw amino-acid sequence, 436 residues long: GTPase Der (436 aa).

EngA-type G domains are found at residues 4–167 (PTIA…PEQQ) and 176–351 (IKFS…ENHR). Residues 10–17 (GRANVGKS), 57–61 (DTGGI), 119–122 (NKID), 182–189 (GRPNVGKS), 229–233 (DTAGM), and 294–297 (NKWD) contribute to the GTP site. Residues 352 to 436 (KRVQSSTLNE…PLHLIARKRN (85 aa)) form the KH-like domain.

This sequence belongs to the TRAFAC class TrmE-Era-EngA-EngB-Septin-like GTPase superfamily. EngA (Der) GTPase family. As to quaternary structure, associates with the 50S ribosomal subunit.

Functionally, GTPase that plays an essential role in the late steps of ribosome biogenesis. In Macrococcus caseolyticus (strain JCSC5402) (Macrococcoides caseolyticum), this protein is GTPase Der.